The sequence spans 1331 residues: Mitogen-activated protein kinase kinase kinase 15 (1331 aa).

The segment covering 1–13 (MEGGGGSGGGGGP) has biased composition (gly residues). A disordered region spans residues 1–61 (MEGGGGSGGG…GEAEGGRGPR (61 aa)). The 257-residue stretch at 656–912 (NGERVVLGKG…AADLLQEGFL (257 aa)) folds into the Protein kinase domain. Residues 662 to 670 (LGKGSYGIV) and Lys-685 contribute to the ATP site. Asp-777 serves as the catalytic Proton acceptor. 2 disordered regions span residues 934 to 964 (GTGT…SDAQ) and 983 to 1005 (LSVP…EERD). Low complexity predominate over residues 940–962 (LPSSGELVGSSSSEHGSISPDSD). A compositionally biased stretch (basic and acidic residues) spans 992–1005 (LDDRSTALPPEERD). Residues 1216 to 1236 (LVQKEREYQNLLRLILDQKTQ) adopt a coiled-coil conformation.

The protein belongs to the protein kinase superfamily. STE Ser/Thr protein kinase family. MAP kinase kinase kinase subfamily. Requires Mg(2+) as cofactor.

It catalyses the reaction L-seryl-[protein] + ATP = O-phospho-L-seryl-[protein] + ADP + H(+). The catalysed reaction is L-threonyl-[protein] + ATP = O-phospho-L-threonyl-[protein] + ADP + H(+). Contains an N-terminal autoinhibitory domain. Activated by phosphorylation at Thr-816, inhibited by phosphorylation at Ser-928. Functionally, serine/threonine kinase which acts as a component of the MAP kinase signal transduction pathway. Once activated, acts as an upstream activator of the p38 MAPK signal transduction cascade through the phosphorylation and activation of several MAP kinase kinases. May function in a signal transduction pathway that is activated by various cell stresses and leads to apoptosis. Involved in phosphorylation of WNK4 in response to osmotic stress or hypotonic low-chloride stimulation via the p38 MAPK signal transduction cascade. The sequence is that of Mitogen-activated protein kinase kinase kinase 15 from Mus musculus (Mouse).